The sequence spans 144 residues: Transcriptional regulator MraZ (144 aa).

2 consecutive SpoVT-AbrB domains span residues 4–47 (EYKN…TADK) and 77–120 (AQEI…DLKQ).

The protein belongs to the MraZ family. Forms oligomers.

It is found in the cytoplasm. It localises to the nucleoid. The chain is Transcriptional regulator MraZ from Treponema denticola (strain ATCC 35405 / DSM 14222 / CIP 103919 / JCM 8153 / KCTC 15104).